We begin with the raw amino-acid sequence, 464 residues long: 3-isopropylmalate dehydratase large subunit (464 aa).

Residues C337, C397, and C400 each coordinate [4Fe-4S] cluster.

The protein belongs to the aconitase/IPM isomerase family. LeuC type 1 subfamily. In terms of assembly, heterodimer of LeuC and LeuD. The cofactor is [4Fe-4S] cluster.

It carries out the reaction (2R,3S)-3-isopropylmalate = (2S)-2-isopropylmalate. The protein operates within amino-acid biosynthesis; L-leucine biosynthesis; L-leucine from 3-methyl-2-oxobutanoate: step 2/4. In terms of biological role, catalyzes the isomerization between 2-isopropylmalate and 3-isopropylmalate, via the formation of 2-isopropylmaleate. This Bacillus cereus (strain AH187) protein is 3-isopropylmalate dehydratase large subunit.